The chain runs to 91 residues: Lipolysis-activating peptide 1-alpha chain (91 aa).

Residues M1 to G22 form the signal peptide. Residues S24–K87 form the LCN-type CS-alpha/beta domain. 3 cysteine pairs are disulfide-bonded: C38/C61, C47/C66, and C51/C68.

This sequence belongs to the long (3 C-C) scorpion toxin superfamily. As to quaternary structure, monomer (edited version) and heterodimer (non-edited version) of this alpha chain and a beta chain (AC P84809). As to expression, expressed by the venom gland.

The protein resides in the secreted. In terms of biological role, the heterodimer non-edited LVP1 induces lipolysis in rat adipocytes. Induction of lipolysis by LVP1 appears to be mediated through the beta-2 adrenergic receptor pathway (ADRB2). Intracerebroventricular injection is not toxic to mice. Functionally, the edited BmKBTx-like, similar to beta-toxins, may modulate voltage-gated sodium channels (Nav) and may block voltage-gated potassium channels (Kv). The polypeptide is Lipolysis-activating peptide 1-alpha chain (Buthus occitanus tunetanus (Common European scorpion)).